The primary structure comprises 117 residues: Small ribosomal subunit protein eS25 (117 aa).

Residues 1 to 34 (MPPKKDPKGGKAPPSKKKEGSGGGKAKKKKWSKG) form a disordered region. Basic residues predominate over residues 25-34 (KAKKKKWSKG).

Belongs to the eukaryotic ribosomal protein eS25 family.

In Caenorhabditis elegans, this protein is Small ribosomal subunit protein eS25 (rps-25).